Consider the following 92-residue polypeptide: Neuropeptide ShK-like2 (92 aa).

The first 23 residues, 1-23 (MTTIRCVLFAVLLFAYCALLIKA), serve as a signal peptide directing secretion. The propeptide occupies 24-51 (RSIDAEAEKTWQEEETKTVAEKSPLKKR). 3 disulfides stabilise this stretch: C53–C92, C61–C85, and C70–C89.

Transcripts are first expressed mostly in the endoderm (with rare ectodermal cells) in the late planulae. They are mostly expressed in endodermal ganglion cells in the body column and tentacles in primary polyps, as well as in a small number of ectodermal sensory neurons in tentacles and body wall. They are not expressed in nematocytes. As to expression, transcripts are predominantly expressed in ectodermal sensory neurons in early and late planulae. They are expressed in endodermal ganglion cells in the body column and tentacles in primary polyps, as well as in a small number of ectodermal neurons in pharynx. They are not expressed in nematocytes.

Its function is as follows. In vivo, this neuropeptide induces contraction paralysis followed by death (within 2 hours) on 4 zebrafish larvae on the 15 tested. Also induces body contraction in Nematostella 11-dpf polyps. The chain is Neuropeptide ShK-like2 from Nematostella vectensis (Starlet sea anemone).